Reading from the N-terminus, the 154-residue chain is SsrA-binding protein (154 aa).

Positions 131 to 154 (DKRQDLKQKEAKRDIERAFKERQQ) are disordered. Basic and acidic residues predominate over residues 132 to 154 (KRQDLKQKEAKRDIERAFKERQQ).

It belongs to the SmpB family.

It is found in the cytoplasm. Its function is as follows. Required for rescue of stalled ribosomes mediated by trans-translation. Binds to transfer-messenger RNA (tmRNA), required for stable association of tmRNA with ribosomes. tmRNA and SmpB together mimic tRNA shape, replacing the anticodon stem-loop with SmpB. tmRNA is encoded by the ssrA gene; the 2 termini fold to resemble tRNA(Ala) and it encodes a 'tag peptide', a short internal open reading frame. During trans-translation Ala-aminoacylated tmRNA acts like a tRNA, entering the A-site of stalled ribosomes, displacing the stalled mRNA. The ribosome then switches to translate the ORF on the tmRNA; the nascent peptide is terminated with the 'tag peptide' encoded by the tmRNA and targeted for degradation. The ribosome is freed to recommence translation, which seems to be the essential function of trans-translation. The chain is SsrA-binding protein from Listeria innocua serovar 6a (strain ATCC BAA-680 / CLIP 11262).